The chain runs to 450 residues: Phosphoglucosamine mutase (450 aa).

The active-site Phosphoserine intermediate is Ser102. Mg(2+) is bound by residues Ser102, Asp242, Asp244, and Asp246. A Phosphoserine modification is found at Ser102.

The protein belongs to the phosphohexose mutase family. Mg(2+) serves as cofactor. In terms of processing, activated by phosphorylation.

It carries out the reaction alpha-D-glucosamine 1-phosphate = D-glucosamine 6-phosphate. In terms of biological role, catalyzes the conversion of glucosamine-6-phosphate to glucosamine-1-phosphate. This Lachnospira eligens (strain ATCC 27750 / DSM 3376 / VPI C15-48 / C15-B4) (Eubacterium eligens) protein is Phosphoglucosamine mutase.